Here is a 178-residue protein sequence, read N- to C-terminus: Crossover junction endodeoxyribonuclease RuvC (178 aa).

Catalysis depends on residues Asp-20, Glu-80, and Asp-154. Asp-20, Glu-80, and Asp-154 together coordinate Mg(2+).

The protein belongs to the RuvC family. As to quaternary structure, homodimer which binds Holliday junction (HJ) DNA. The HJ becomes 2-fold symmetrical on binding to RuvC with unstacked arms; it has a different conformation from HJ DNA in complex with RuvA. In the full resolvosome a probable DNA-RuvA(4)-RuvB(12)-RuvC(2) complex forms which resolves the HJ. Mg(2+) serves as cofactor.

It localises to the cytoplasm. The catalysed reaction is Endonucleolytic cleavage at a junction such as a reciprocal single-stranded crossover between two homologous DNA duplexes (Holliday junction).. In terms of biological role, the RuvA-RuvB-RuvC complex processes Holliday junction (HJ) DNA during genetic recombination and DNA repair. Endonuclease that resolves HJ intermediates. Cleaves cruciform DNA by making single-stranded nicks across the HJ at symmetrical positions within the homologous arms, yielding a 5'-phosphate and a 3'-hydroxyl group; requires a central core of homology in the junction. The consensus cleavage sequence is 5'-(A/T)TT(C/G)-3'. Cleavage occurs on the 3'-side of the TT dinucleotide at the point of strand exchange. HJ branch migration catalyzed by RuvA-RuvB allows RuvC to scan DNA until it finds its consensus sequence, where it cleaves and resolves the cruciform DNA. In Rhodopirellula baltica (strain DSM 10527 / NCIMB 13988 / SH1), this protein is Crossover junction endodeoxyribonuclease RuvC.